Consider the following 148-residue polypeptide: Coactosin (148 aa).

Residues methionine 1–lysine 134 form the ADF-H domain. The F-loop; important for stable binding to G-actin and F-actin signature appears at aspartate 71 to arginine 76. Serine 147 is modified (phosphoserine).

Belongs to the actin-binding proteins ADF family. Coactosin subfamily. As to quaternary structure, interacts with 14-3-3 protein 3. Phosphorylation at Ser-147 appears not to affect its binding to actin; however, it may regulate phagocytosis and motility.

It localises to the cytoplasm. The protein localises to the cell projection. It is found in the phagocytic cup. The protein resides in the pseudopodium. Its subcellular location is the cell membrane. It localises to the cytoskeleton. Its function is as follows. Actin-binding protein which is involved in F-actin stabilization. May play a role during phagocytosis and pseudopod formation by contributing to the maintenance of F-actin. This is Coactosin from Entamoeba histolytica (strain ATCC 30459 / HM-1:IMSS / ABRM).